A 146-amino-acid polypeptide reads, in one-letter code: Hemoglobin subunit beta (146 aa).

The 145-residue stretch at 2–146 (FLTAEEKSLV…VANALAHKYH (145 aa)) folds into the Globin domain. A Phosphoserine modification is found at Ser-44. Lys-59 bears the N6-acetyllysine mark. His-63 contacts heme b. Lys-82 carries the post-translational modification N6-acetyllysine. Residue His-92 participates in heme b binding. Residue Cys-93 is modified to S-nitrosocysteine. Residue Lys-144 is modified to N6-acetyllysine.

Belongs to the globin family. In terms of assembly, heterotetramer of two alpha chains and two beta chains. Red blood cells.

Involved in oxygen transport from the lung to the various peripheral tissues. The polypeptide is Hemoglobin subunit beta (HBB) (Proteles cristata (Aardwolf)).